We begin with the raw amino-acid sequence, 266 residues long: NADH dehydrogenase [ubiquinone] iron-sulfur protein 3, mitochondrial (266 aa).

Residues 1 to 38 (MAAAVAAAARGCWQRLVGSAAPARVAGRPSVLLLPVRR) constitute a mitochondrion transit peptide.

Belongs to the complex I 30 kDa subunit family. Core subunit of respiratory chain NADH dehydrogenase (Complex I) which is composed of 45 different subunits. Interacts with NDUFAF3. Interacts with RAB5IF. Found in subcomplexes containing subunits NDUFS2, MT-ND1 and NDUFA13.

The protein localises to the mitochondrion inner membrane. The catalysed reaction is a ubiquinone + NADH + 5 H(+)(in) = a ubiquinol + NAD(+) + 4 H(+)(out). In terms of biological role, core subunit of the mitochondrial membrane respiratory chain NADH dehydrogenase (Complex I) which catalyzes electron transfer from NADH through the respiratory chain, using ubiquinone as an electron acceptor. Essential for the catalytic activity and assembly of complex I. The sequence is that of NADH dehydrogenase [ubiquinone] iron-sulfur protein 3, mitochondrial (NDUFS3) from Bos taurus (Bovine).